We begin with the raw amino-acid sequence, 83 residues long: UPF0297 protein LEUM_0557 (83 aa).

This sequence belongs to the UPF0297 family.

In Leuconostoc mesenteroides subsp. mesenteroides (strain ATCC 8293 / DSM 20343 / BCRC 11652 / CCM 1803 / JCM 6124 / NCDO 523 / NBRC 100496 / NCIMB 8023 / NCTC 12954 / NRRL B-1118 / 37Y), this protein is UPF0297 protein LEUM_0557.